A 210-amino-acid polypeptide reads, in one-letter code: 7-carboxy-7-deazaguanine synthase (210 aa).

Substrate contacts are provided by residues 12–14 (LQG) and Arg-27. Positions 18–210 (HAGRASVFCR…VQTHKSLGIR (193 aa)) constitute a Radical SAM core domain. The [4Fe-4S] cluster site is built by Cys-31, Cys-46, and Cys-49. Position 51 (Thr-51) interacts with Mg(2+). Thr-90 lines the substrate pocket. S-adenosyl-L-methionine is bound by residues Gly-92, 133 to 135 (SPK), and 173 to 176 (QPMD).

The protein belongs to the radical SAM superfamily. 7-carboxy-7-deazaguanine synthase family. In terms of assembly, homodimer. Requires [4Fe-4S] cluster as cofactor. The cofactor is S-adenosyl-L-methionine. It depends on Mg(2+) as a cofactor.

It catalyses the reaction 6-carboxy-5,6,7,8-tetrahydropterin + H(+) = 7-carboxy-7-deazaguanine + NH4(+). It functions in the pathway purine metabolism; 7-cyano-7-deazaguanine biosynthesis. In terms of biological role, catalyzes the complex heterocyclic radical-mediated conversion of 6-carboxy-5,6,7,8-tetrahydropterin (CPH4) to 7-carboxy-7-deazaguanine (CDG), a step common to the biosynthetic pathways of all 7-deazapurine-containing compounds. This chain is 7-carboxy-7-deazaguanine synthase, found in Bradyrhizobium diazoefficiens (strain JCM 10833 / BCRC 13528 / IAM 13628 / NBRC 14792 / USDA 110).